We begin with the raw amino-acid sequence, 443 residues long: SAM50-like protein CG7639 (443 aa).

Positions Ala23–Asn101 constitute a POTRA domain.

It belongs to the SAM50/omp85 family. Associates with the mitochondrial contact site and cristae organizing system (MICOS) complex (also known as MINOS or MitOS complex).

It localises to the mitochondrion outer membrane. Its function is as follows. May play a role in the maintenance of the structure of mitochondrial cristae. This Drosophila melanogaster (Fruit fly) protein is SAM50-like protein CG7639.